A 116-amino-acid chain; its full sequence is NADPH-dependent 7-cyano-7-deazaguanine reductase (116 aa).

The active-site Thioimide intermediate is Cys31. The active-site Proton donor is Asp38. Substrate contacts are provided by residues 53–55 (VEL) and 72–73 (YE).

It belongs to the GTP cyclohydrolase I family. QueF type 1 subfamily.

Its subcellular location is the cytoplasm. It catalyses the reaction 7-aminomethyl-7-carbaguanine + 2 NADP(+) = 7-cyano-7-deazaguanine + 2 NADPH + 3 H(+). Its pathway is tRNA modification; tRNA-queuosine biosynthesis. Its function is as follows. Catalyzes the NADPH-dependent reduction of 7-cyano-7-deazaguanine (preQ0) to 7-aminomethyl-7-deazaguanine (preQ1). This is NADPH-dependent 7-cyano-7-deazaguanine reductase from Chloroherpeton thalassium (strain ATCC 35110 / GB-78).